A 400-amino-acid polypeptide reads, in one-letter code: Glutamyl-tRNA reductase (400 aa).

Substrate is bound by residues 45-48 (TCNR), serine 103, 108-110 (EDQ), and glutamine 114. Catalysis depends on cysteine 46, which acts as the Nucleophile. 179–184 (GYGEIG) contributes to the NADP(+) binding site.

It belongs to the glutamyl-tRNA reductase family. In terms of assembly, homodimer.

The catalysed reaction is (S)-4-amino-5-oxopentanoate + tRNA(Glu) + NADP(+) = L-glutamyl-tRNA(Glu) + NADPH + H(+). The protein operates within porphyrin-containing compound metabolism; protoporphyrin-IX biosynthesis; 5-aminolevulinate from L-glutamyl-tRNA(Glu): step 1/2. In terms of biological role, catalyzes the NADPH-dependent reduction of glutamyl-tRNA(Glu) to glutamate 1-semialdehyde (GSA). This Clostridium perfringens (strain SM101 / Type A) protein is Glutamyl-tRNA reductase.